The following is a 490-amino-acid chain: MTELSSPNLDSASQKPRISTENPPPPPPHISIGVTTGDPATSPARTVNQIKKITVLPLVFLIFYEVSGGPFGIEDSVKAAGPLLAIVGFIVFPFIWSIPEALITAEMGTMFPENGGYVVWVTLAMGPYWGFQQGWVKWLSGVIDNALYPILFLDYLKSGIPILGSGIPRVAAILVLTVALTYLNYRGLSIVGVAAVLLGVFSILPFVVMSFMSIPKLKPSRWLVVSKKMKGVNWSLYLNTLFWNLNYWDSVSTLTGEVENPSKTLPRALFYALLLVVFSYIFPVLTGTGAIALDQKLWTDGYFADIGKVIGGVWLGWWIQAAAATSNMGMFLAEMSSDSFQLLGMAERGMLPEVFAKRSRYRTPWVGILFSASGVIILSWLSFQEIVAAENLLYCFGMVLEFITFVRLRMKYPAASRPFKIPVGVLGSVLMCIPPTVLIGVIMAFTNLKVALVSLAAIVIGLVLQPCLKQVEKKGWLKFSTSSHLPNLME.

Over residues 1-21 (MTELSSPNLDSASQKPRISTE) the composition is skewed to polar residues. The disordered stretch occupies residues 1-38 (MTELSSPNLDSASQKPRISTENPPPPPPHISIGVTTGD). 12 consecutive transmembrane segments (helical) span residues 53 to 73 (ITVL…PFGI), 83 to 103 (LLAI…EALI), 116 to 136 (GYVV…QGWV), 160 to 180 (IPIL…TVAL), 188 to 208 (LSIV…PFVV), 231 to 248 (GVNW…LNYW), 273 to 293 (LLLV…AIAL), 303 to 323 (FADI…QAAA), 363 to 383 (TPWV…WLSF), 386 to 406 (IVAA…ITFV), 425 to 445 (VLGS…IMAF), and 448 to 468 (LKVA…QPCL).

Belongs to the amino acid-polyamine-organocation (APC) superfamily. Polyamine:cation symporter (PHS) (TC 2.A.3.12) family.

Its subcellular location is the cell membrane. Its function is as follows. Cell membrane polyamine/proton symporter involved in the polyamine uptake in cells. Possesses high affinity for spermine and spermidine and lower affinity for putrescine. Transports paraquat, a polyamine analog, and thus confers sensitivity to this chemical which is used as a herbicide. This chain is Polyamine transporter RMV1 (RMV1), found in Arabidopsis thaliana (Mouse-ear cress).